The following is a 270-amino-acid chain: uncharacterized protein (270 aa).

2 disordered regions span residues 35-67 (IKQD…GGNK) and 168-204 (SNNN…DNSN). Positions 39 to 48 (NNNNNNNNTN) are enriched in low complexity. Residues 49–67 (VSLSPSIKSQATSSTGGNK) are compositionally biased toward polar residues. Low complexity predominate over residues 168–191 (SNNNNNNNNNNNNNNNNNNNNNNN).

This is an uncharacterized protein from Dictyostelium discoideum (Social amoeba).